A 46-amino-acid polypeptide reads, in one-letter code: Succinate dehydrogenase subunit 8, mitochondrial (46 aa).

In terms of assembly, component of complex II composed of eight subunits in plants: four classical SDH subunits SDH1, SDH2, SDH3 and SDH4 (a flavoprotein (FP), an iron-sulfur protein (IP), and a cytochrome b composed of a large and a small subunit.), as well as four subunits unknown in mitochondria from bacteria and heterotrophic eukaryotes.

The protein resides in the mitochondrion inner membrane. It functions in the pathway carbohydrate metabolism; tricarboxylic acid cycle. This Arabidopsis thaliana (Mouse-ear cress) protein is Succinate dehydrogenase subunit 8, mitochondrial.